The following is a 77-amino-acid chain: Translation initiation factor IF-1, chloroplastic (77 aa).

In terms of domain architecture, S1-like spans 1–71 (MKRQKWIHEG…TRGRIIYRLR (71 aa)).

The protein belongs to the IF-1 family. As to quaternary structure, component of the 30S ribosomal translation pre-initiation complex which assembles on the 30S ribosome in the order IF-2 and IF-3, IF-1 and N-formylmethionyl-tRNA(fMet); mRNA recruitment can occur at any time during PIC assembly.

The protein localises to the plastid. It is found in the chloroplast. One of the essential components for the initiation of protein synthesis. Stabilizes the binding of IF-2 and IF-3 on the 30S subunit to which N-formylmethionyl-tRNA(fMet) subsequently binds. Helps modulate mRNA selection, yielding the 30S pre-initiation complex (PIC). Upon addition of the 50S ribosomal subunit IF-1, IF-2 and IF-3 are released leaving the mature 70S translation initiation complex. The protein is Translation initiation factor IF-1, chloroplastic of Leucophyllum frutescens (Texas ranger).